A 248-amino-acid chain; its full sequence is MTLHEVPTILHRCGDCPIRHRAVCARCDSEELATLEQIKYYRSYQAGQTVIWSGDKMDFVASVVTGIATLTQTMEDGRRQMVGLLLPSDFVGRPGRQTVAYDVTATTDLLMCCFRRKPFEEMMQKTPHVGQRLLEMTLDELDAAREWMLLLGRKTAREKIASLLAIIARRDAALKLRESNGPMTFDLPLTREEMADYLGLTLETVSRQVSALKRDGVIALEGKRHVIVTDFARLLEEAGDDSDGGLPV.

In terms of domain architecture, HTH crp-type spans 154–232 (KTAREKIASL…KRHVIVTDFA (79 aa)). The segment at residues 191–210 (REEMADYLGLTLETVSRQVS) is a DNA-binding region (H-T-H motif).

Anaerobic regulatory protein; transcriptional activator of hemA. Appears to regulate other genes. This Cereibacter sphaeroides (strain ATCC 17023 / DSM 158 / JCM 6121 / CCUG 31486 / LMG 2827 / NBRC 12203 / NCIMB 8253 / ATH 2.4.1.) (Rhodobacter sphaeroides) protein is Transcriptional activator protein FnrL (fnrL).